A 514-amino-acid polypeptide reads, in one-letter code: Putative fucosyltransferase 10 (514 aa).

N-linked (GlcNAc...) asparagine glycans are attached at residues asparagine 185, asparagine 210, asparagine 355, asparagine 377, and asparagine 456.

Belongs to the glycosyltransferase 37 family. In terms of tissue distribution, expressed in root, leaves, stems and seedlings.

Its subcellular location is the golgi apparatus. The protein operates within protein modification; protein glycosylation. In terms of biological role, may be involved in cell wall biosynthesis. May act as a fucosyltransferase. The protein is Putative fucosyltransferase 10 (FUT10) of Arabidopsis thaliana (Mouse-ear cress).